The primary structure comprises 194 residues: MKVTKAELDCVAVKPEQYPNSPLPEVALAGRSNVGKSSFINKMINRKKLARTSQRPGKTQTLNFYNINDILHFVDVPGYGFAKVSKKDREAWGRMIETYLQQRGQLKAVLQIIDIRHDPTKDDQLMYDWLKHFEIPVIIIATKCDKIPKGKWPKHVKNIASVLEKDGGDPIVIFSSETGVGKDEAWKAILHAIS.

The region spanning 22–194 (PLPEVALAGR…AWKAILHAIS (173 aa)) is the EngB-type G domain. GTP-binding positions include 30–37 (GRSNVGKS), 57–61 (GKTQT), 75–78 (DVPG), 142–145 (TKCD), and 174–176 (FSS). Residues Ser37 and Thr59 each contribute to the Mg(2+) site.

This sequence belongs to the TRAFAC class TrmE-Era-EngA-EngB-Septin-like GTPase superfamily. EngB GTPase family. Requires Mg(2+) as cofactor.

Its function is as follows. Necessary for normal cell division and for the maintenance of normal septation. In Halalkalibacterium halodurans (strain ATCC BAA-125 / DSM 18197 / FERM 7344 / JCM 9153 / C-125) (Bacillus halodurans), this protein is Probable GTP-binding protein EngB.